The following is a 228-amino-acid chain: Prolactin-2B1 (228 aa).

An N-terminal signal peptide occupies residues 1-31; that stretch reads MLLSLTQMLSSRASSRLFLVSYLLLWENVVS. 2 disulfides stabilise this stretch: C89/C194 and C203/C228.

This sequence belongs to the somatotropin/prolactin family. In terms of tissue distribution, expressed specifically in placenta. Expressed at high levels in trophoblast cells from both junctional and labyrinth zones of the chorioallantoic placenta the last week of gestation.

The protein localises to the secreted. The chain is Prolactin-2B1 (Prl2b1) from Mus musculus (Mouse).